The primary structure comprises 344 residues: RNA 3'-terminal phosphate cyclase (344 aa).

ATP contacts are provided by residues Gln102 and 284 to 288 (FLGDQ). His308 acts as the Tele-AMP-histidine intermediate in catalysis.

Belongs to the RNA 3'-terminal cyclase family. Type 1 subfamily.

It is found in the cytoplasm. The catalysed reaction is a 3'-end 3'-phospho-ribonucleotide-RNA + ATP = a 3'-end 2',3'-cyclophospho-ribonucleotide-RNA + AMP + diphosphate. Functionally, catalyzes the conversion of 3'-phosphate to a 2',3'-cyclic phosphodiester at the end of RNA. The mechanism of action of the enzyme occurs in 3 steps: (A) adenylation of the enzyme by ATP; (B) transfer of adenylate to an RNA-N3'P to produce RNA-N3'PP5'A; (C) and attack of the adjacent 2'-hydroxyl on the 3'-phosphorus in the diester linkage to produce the cyclic end product. The biological role of this enzyme is unknown but it is likely to function in some aspects of cellular RNA processing. In Thermococcus gammatolerans (strain DSM 15229 / JCM 11827 / EJ3), this protein is RNA 3'-terminal phosphate cyclase.